The primary structure comprises 577 residues: DNA-directed RNA polymerase subunit alpha (577 aa).

Residues 1–461 form an alpha N-terminal domain (alpha-NTD) region; it reads MIKIIIKETF…QLFLPLQQIR (461 aa). Residues 510–577 are alpha C-terminal domain (alpha-CTD); it reads FDHRLLELDI…ALQLMKLTLK (68 aa).

The protein belongs to the RNA polymerase alpha chain family. As to quaternary structure, in plastids the minimal PEP RNA polymerase catalytic core is composed of four subunits: alpha, beta, beta', and beta''. When a (nuclear-encoded) sigma factor is associated with the core the holoenzyme is formed, which can initiate transcription.

Its subcellular location is the plastid. The protein localises to the chloroplast. The catalysed reaction is RNA(n) + a ribonucleoside 5'-triphosphate = RNA(n+1) + diphosphate. DNA-dependent RNA polymerase catalyzes the transcription of DNA into RNA using the four ribonucleoside triphosphates as substrates. This chain is DNA-directed RNA polymerase subunit alpha, found in Tupiella akineta (Green alga).